The sequence spans 307 residues: MPRTENDTWDLASSVGATATMVAAARAVATRAEDPVIDDPYAEPLVRAVGIDFFAKLASGELTPEDLDVSGDESPVGMSRFADGMAARTRFFDDFFTDACAAGVRQAVILASGLDARGYRLTWPEGMTLFEIDQPEVIEFKRTTLAGLGATPSTHLATVAIDLREDWPTALRDAGFDPSVPTAWIAEGLLGYLPPDAQDRLLDTIGELSASGSRLAVESVPSQQSADQDEMREKMKDSTDRWRSHGFDLDFSELVFLGERANVPDYLRERGWAVTATPTNDLLTRYGLAPLDTDEGFAEVVYVNAAR.

S-adenosyl-L-methionine is bound by residues aspartate 133 and 162–163 (DL). The tract at residues 213–234 (SRLAVESVPSQQSADQDEMREK) is disordered.

This sequence belongs to the UPF0677 family.

Its function is as follows. Exhibits S-adenosyl-L-methionine-dependent methyltransferase activity. This is Putative S-adenosyl-L-methionine-dependent methyltransferase Mflv_5023 from Mycolicibacterium gilvum (strain PYR-GCK) (Mycobacterium gilvum (strain PYR-GCK)).